Reading from the N-terminus, the 507-residue chain is Histidine ammonia-lyase (507 aa).

A cross-link (5-imidazolinone (Ala-Gly)) is located at residues 140–142; the sequence is ASG. Ser141 carries the post-translational modification 2,3-didehydroalanine (Ser).

This sequence belongs to the PAL/histidase family. Contains an active site 4-methylidene-imidazol-5-one (MIO), which is formed autocatalytically by cyclization and dehydration of residues Ala-Ser-Gly.

It is found in the cytoplasm. The catalysed reaction is L-histidine = trans-urocanate + NH4(+). It participates in amino-acid degradation; L-histidine degradation into L-glutamate; N-formimidoyl-L-glutamate from L-histidine: step 1/3. The protein is Histidine ammonia-lyase of Yersinia enterocolitica serotype O:8 / biotype 1B (strain NCTC 13174 / 8081).